Consider the following 154-residue polypeptide: Ribonuclease H (154 aa).

The RNase H type-1 domain maps to Gly5–Glu147. Mg(2+)-binding residues include Asp14, Glu53, Asp75, and Asp139.

It belongs to the RNase H family. As to quaternary structure, monomer. The cofactor is Mg(2+).

The protein resides in the cytoplasm. The catalysed reaction is Endonucleolytic cleavage to 5'-phosphomonoester.. Endonuclease that specifically degrades the RNA of RNA-DNA hybrids. The polypeptide is Ribonuclease H (Anaplasma marginale (strain St. Maries)).